Consider the following 505-residue polypeptide: Trans-cinnamate 4-monooxygenase (505 aa).

The chain crosses the membrane as a helical span at residues 3–23 (LLLVEKTLLALFAAIIASIFI). (E)-cinnamate is bound by residues 213–218 (RSRLAQ) and Ala306. Cys447 is a binding site for heme.

It belongs to the cytochrome P450 family. It depends on heme as a cofactor.

The protein resides in the membrane. The catalysed reaction is (E)-cinnamate + reduced [NADPH--hemoprotein reductase] + O2 = (E)-4-coumarate + oxidized [NADPH--hemoprotein reductase] + H2O + H(+). It participates in phenylpropanoid metabolism; trans-4-coumarate biosynthesis; trans-4-coumarate from trans-cinnamate: step 1/1. In terms of biological role, catalyzes the first oxidative step of the phenylpropanoid pathway in higher plants by transforming trans-cinnamate into p-coumarate. The compounds formed by this pathway are essential components for lignification, pollination, and defense against ultraviolet light, predators and pathogens. The protein is Trans-cinnamate 4-monooxygenase (CYP73A12) of Zinnia elegans (Garden zinnia).